The primary structure comprises 490 residues: Aspartyl/glutamyl-tRNA(Asn/Gln) amidotransferase subunit B (490 aa).

This sequence belongs to the GatB/GatE family. GatB subfamily. Heterotrimer of A, B and C subunits.

The catalysed reaction is L-glutamyl-tRNA(Gln) + L-glutamine + ATP + H2O = L-glutaminyl-tRNA(Gln) + L-glutamate + ADP + phosphate + H(+). It catalyses the reaction L-aspartyl-tRNA(Asn) + L-glutamine + ATP + H2O = L-asparaginyl-tRNA(Asn) + L-glutamate + ADP + phosphate + 2 H(+). Its function is as follows. Allows the formation of correctly charged Asn-tRNA(Asn) or Gln-tRNA(Gln) through the transamidation of misacylated Asp-tRNA(Asn) or Glu-tRNA(Gln) in organisms which lack either or both of asparaginyl-tRNA or glutaminyl-tRNA synthetases. The reaction takes place in the presence of glutamine and ATP through an activated phospho-Asp-tRNA(Asn) or phospho-Glu-tRNA(Gln). This is Aspartyl/glutamyl-tRNA(Asn/Gln) amidotransferase subunit B from Methylorubrum extorquens (strain PA1) (Methylobacterium extorquens).